A 245-amino-acid chain; its full sequence is Adenosylcobinamide-GDP ribazoletransferase (245 aa).

6 helical membrane passes run 35–55, 108–128, 137–157, 176–196, 197–217, and 222–242; these read WFPL…ALGL, IGAF…IGAH, GVLI…AALV, IAIG…TPVM, TTVT…HLAR, and INGD…LLAA.

The protein belongs to the CobS family. Mg(2+) is required as a cofactor.

It localises to the cell inner membrane. The enzyme catalyses alpha-ribazole + adenosylcob(III)inamide-GDP = adenosylcob(III)alamin + GMP + H(+). It carries out the reaction alpha-ribazole 5'-phosphate + adenosylcob(III)inamide-GDP = adenosylcob(III)alamin 5'-phosphate + GMP + H(+). Its pathway is cofactor biosynthesis; adenosylcobalamin biosynthesis; adenosylcobalamin from cob(II)yrinate a,c-diamide: step 7/7. In terms of biological role, joins adenosylcobinamide-GDP and alpha-ribazole to generate adenosylcobalamin (Ado-cobalamin). Also synthesizes adenosylcobalamin 5'-phosphate from adenosylcobinamide-GDP and alpha-ribazole 5'-phosphate. The sequence is that of Adenosylcobinamide-GDP ribazoletransferase from Nitratidesulfovibrio vulgaris (strain DP4) (Desulfovibrio vulgaris).